Here is a 1691-residue protein sequence, read N- to C-terminus: Protein TIC 214 (1691 aa).

A run of 6 helical transmembrane segments spans residues 19–39 (MLLGFYYGLLTTLPVGPSQIL), 60–80 (VLAQLITASSIYCSPIYLLLL), 84–104 (LLTIVAIPYTLLFCLVIKDFP), 123–143 (LFLISFFFQILNPIMLPNSVL), 158–178 (TVFMVSTFMGWLTGQAAFNFF), and 200–220 (FIYATFSIVSISYAVAYLGRA). The disordered stretch occupies residues 819 to 839 (EKQHTLQRKHKEIGSKSRELK).

It belongs to the TIC214 family. As to quaternary structure, part of the Tic complex.

It is found in the plastid. It localises to the chloroplast inner membrane. In terms of biological role, involved in protein precursor import into chloroplasts. May be part of an intermediate translocation complex acting as a protein-conducting channel at the inner envelope. The protein is Protein TIC 214 of Adiantum capillus-veneris (Maidenhair fern).